The following is an 843-amino-acid chain: Protein P (843 aa).

A terminal protein domain (TP) region spans residues 1–177 (MPLSYQHFRK…FCGSPYSWEQ (177 aa)). The interval 178 to 346 (DLQHGRLVFQ…YCLCHIVNLI (169 aa)) is spacer. Disordered stretches follow at residues 220–269 (KSRL…HNCA) and 291–316 (TSKG…RSRS). The tract at residues 347-690 (EDWGPCTEHG…YLNLYPVARQ (344 aa)) is polymerase/reverse transcriptase domain (RT). The Reverse transcriptase domain occupies 357 to 600 (EHRIRTPRTP…YSLNFMGYVI (244 aa)). Positions 429, 551, and 552 each coordinate Mg(2+).

This sequence belongs to the hepadnaviridae P protein family.

The catalysed reaction is DNA(n) + a 2'-deoxyribonucleoside 5'-triphosphate = DNA(n+1) + diphosphate. It catalyses the reaction Endonucleolytic cleavage to 5'-phosphomonoester.. Its activity is regulated as follows. Activated by host HSP70 and HSP40 in vitro to be able to bind the epsilon loop of the pgRNA. Because deletion of the RNase H region renders the protein partly chaperone-independent, the chaperones may be needed indirectly to relieve occlusion of the RNA-binding site by this domain. Inhibited by several reverse-transcriptase inhibitors: Lamivudine, Adefovir and Entecavir. Functionally, multifunctional enzyme that converts the viral RNA genome into dsDNA in viral cytoplasmic capsids. This enzyme displays a DNA polymerase activity that can copy either DNA or RNA templates, and a ribonuclease H (RNase H) activity that cleaves the RNA strand of RNA-DNA heteroduplexes in a partially processive 3'- to 5'-endonucleasic mode. Neo-synthesized pregenomic RNA (pgRNA) are encapsidated together with the P protein, and reverse-transcribed inside the nucleocapsid. Initiation of reverse-transcription occurs first by binding the epsilon loop on the pgRNA genome, and is initiated by protein priming, thereby the 5'-end of (-)DNA is covalently linked to P protein. Partial (+)DNA is synthesized from the (-)DNA template and generates the relaxed circular DNA (RC-DNA) genome. After budding and infection, the RC-DNA migrates in the nucleus, and is converted into a plasmid-like covalently closed circular DNA (cccDNA). The activity of P protein does not seem to be necessary for cccDNA generation, and is presumably released from (+)DNA by host nuclear DNA repair machinery. This is Protein P from Homo sapiens (Human).